Consider the following 119-residue polypeptide: Large ribosomal subunit protein uL18 (119 aa).

Belongs to the universal ribosomal protein uL18 family. Part of the 50S ribosomal subunit; part of the 5S rRNA/L5/L18/L25 subcomplex. Contacts the 5S and 23S rRNAs.

Its function is as follows. This is one of the proteins that bind and probably mediate the attachment of the 5S RNA into the large ribosomal subunit, where it forms part of the central protuberance. This chain is Large ribosomal subunit protein uL18, found in Endomicrobium trichonymphae.